Reading from the N-terminus, the 424-residue chain is Geranylgeranyl pyrophosphate synthase D (424 aa).

A disordered region spans residues 42–73 (PSATWPSVPKVHKRNRSTSLSDQQTAKKAHAN). The segment covering 58–67 (STSLSDQQTA) has biased composition (polar residues). Positions 147, 150, and 179 each coordinate isopentenyl diphosphate. Positions 186 and 190 each coordinate Mg(2+). Arg-195 is a dimethylallyl diphosphate binding site. Arg-196 contributes to the isopentenyl diphosphate binding site. 5 residues coordinate dimethylallyl diphosphate: Lys-274, Thr-275, Gln-311, Lys-328, and Lys-338.

It belongs to the FPP/GGPP synthase family. Mg(2+) is required as a cofactor.

Its subcellular location is the cytoplasm. It catalyses the reaction isopentenyl diphosphate + dimethylallyl diphosphate = (2E)-geranyl diphosphate + diphosphate. It carries out the reaction isopentenyl diphosphate + (2E)-geranyl diphosphate = (2E,6E)-farnesyl diphosphate + diphosphate. The catalysed reaction is isopentenyl diphosphate + (2E,6E)-farnesyl diphosphate = (2E,6E,10E)-geranylgeranyl diphosphate + diphosphate. Its pathway is isoprenoid biosynthesis; farnesyl diphosphate biosynthesis; farnesyl diphosphate from geranyl diphosphate and isopentenyl diphosphate: step 1/1. It functions in the pathway isoprenoid biosynthesis; geranyl diphosphate biosynthesis; geranyl diphosphate from dimethylallyl diphosphate and isopentenyl diphosphate: step 1/1. It participates in isoprenoid biosynthesis; geranylgeranyl diphosphate biosynthesis; geranylgeranyl diphosphate from farnesyl diphosphate and isopentenyl diphosphate: step 1/1. Its function is as follows. Catalyzes the trans-addition of the 3 molecules of isopentenyl diphosphate (IPP) onto dimethylallyl diphosphate (DMAPP) to form geranylgeranyl pyrophosphate (GGDP). This Phomopsis amygdali (Fusicoccum amygdali) protein is Geranylgeranyl pyrophosphate synthase D (GGS-D).